A 261-amino-acid chain; its full sequence is ATP synthase subunit a (261 aa).

Transmembrane regions (helical) follow at residues 30–50 (VLFT…GLFM), 63–83 (WQVA…ANIG), 96–116 (LFMF…VLGL), 125–145 (IAIT…VGFW), 151–171 (FFSL…IAPI), 187–207 (LFVA…FVIN), 214–234 (LWLG…ISAL), and 235–255 (ELLV…LYIN).

This sequence belongs to the ATPase A chain family. In terms of assembly, F-type ATPases have 2 components, CF(1) - the catalytic core - and CF(0) - the membrane proton channel. CF(1) has five subunits: alpha(3), beta(3), gamma(1), delta(1), epsilon(1). CF(0) has three main subunits: a(1), b(2) and c(9-12). The alpha and beta chains form an alternating ring which encloses part of the gamma chain. CF(1) is attached to CF(0) by a central stalk formed by the gamma and epsilon chains, while a peripheral stalk is formed by the delta and b chains.

It is found in the cell inner membrane. Functionally, key component of the proton channel; it plays a direct role in the translocation of protons across the membrane. The polypeptide is ATP synthase subunit a (Sphingopyxis alaskensis (strain DSM 13593 / LMG 18877 / RB2256) (Sphingomonas alaskensis)).